A 207-amino-acid chain; its full sequence is MSVYAVGLTGGIACGKSLLAQLFEALNTTVVDADIIARQVVEPGPVLNCIVARFGSKILRADGCLDRRFLRQRVFADVAERKALEAIVHPVIRSGLKQAAAAAAGPYVLVVIPLLAEAGGRIGYPWLQRILVVDAIPEVQHARLMQRDSIDAEQASLMIAAQIGRKERLAIADDIVFNDGDPVHLGGQVCNLDARYRALASVFSDVD.

The DPCK domain occupies 5–203 (AVGLTGGIAC…ARYRALASVF (199 aa)). Residue 13 to 18 (ACGKSL) participates in ATP binding.

This sequence belongs to the CoaE family.

Its subcellular location is the cytoplasm. It catalyses the reaction 3'-dephospho-CoA + ATP = ADP + CoA + H(+). Its pathway is cofactor biosynthesis; coenzyme A biosynthesis; CoA from (R)-pantothenate: step 5/5. Its function is as follows. Catalyzes the phosphorylation of the 3'-hydroxyl group of dephosphocoenzyme A to form coenzyme A. This chain is Dephospho-CoA kinase, found in Xylella fastidiosa (strain 9a5c).